Consider the following 262-residue polypeptide: Indole-3-glycerol phosphate synthase (262 aa).

This sequence belongs to the TrpC family.

It carries out the reaction 1-(2-carboxyphenylamino)-1-deoxy-D-ribulose 5-phosphate + H(+) = (1S,2R)-1-C-(indol-3-yl)glycerol 3-phosphate + CO2 + H2O. Its pathway is amino-acid biosynthesis; L-tryptophan biosynthesis; L-tryptophan from chorismate: step 4/5. This is Indole-3-glycerol phosphate synthase from Aromatoleum aromaticum (strain DSM 19018 / LMG 30748 / EbN1) (Azoarcus sp. (strain EbN1)).